The sequence spans 83 residues: Small ribosomal subunit protein uS17 (83 aa).

Belongs to the universal ribosomal protein uS17 family. Part of the 30S ribosomal subunit.

Functionally, one of the primary rRNA binding proteins, it binds specifically to the 5'-end of 16S ribosomal RNA. The polypeptide is Small ribosomal subunit protein uS17 (Gloeobacter violaceus (strain ATCC 29082 / PCC 7421)).